A 627-amino-acid polypeptide reads, in one-letter code: Druantia protein DruC (627 aa).

It localises to the cytoplasm. Functionally, component of antiviral defense system Druantia type I, composed of DruA, DruB, DruC, DruD and DruE. Expression of Druantia in E.coli (strain MG1655) confers resistance to phage lambda, SECphi18, SECphi27 and T4. This is Druantia protein DruC from Escherichia coli (strain UMEA 4076-1).